Here is a 670-residue protein sequence, read N- to C-terminus: ATP synthase subunit alpha 2 (670 aa).

180 to 187 (GDRATGKT) contacts ATP. The segment at 527 to 670 (AEDAAGDIGG…DAEAEARHKR (144 aa)) is disordered. Residues 543 to 588 (ARGDADRDADHGANREVSREVSPEASREVSREVSREVSHEADRDAA) are compositionally biased toward basic and acidic residues. Residues 589 to 599 (ADAARVAGRAP) show a composition bias toward low complexity. The segment covering 621 to 639 (ADGDRASASRPRPDARGDA) has biased composition (basic and acidic residues). Low complexity predominate over residues 640-661 (ARTAPSPQGGAEVNVNAAANVD).

Belongs to the ATPase alpha/beta chains family. F-type ATPases have 2 components, CF(1) - the catalytic core - and CF(0) - the membrane proton channel. CF(1) has five subunits: alpha(3), beta(3), gamma(1), delta(1), epsilon(1). CF(0) has three main subunits: a(1), b(2) and c(9-12). The alpha and beta chains form an alternating ring which encloses part of the gamma chain. CF(1) is attached to CF(0) by a central stalk formed by the gamma and epsilon chains, while a peripheral stalk is formed by the delta and b chains.

It localises to the cell inner membrane. It carries out the reaction ATP + H2O + 4 H(+)(in) = ADP + phosphate + 5 H(+)(out). Its function is as follows. Produces ATP from ADP in the presence of a proton gradient across the membrane. The alpha chain is a regulatory subunit. In Burkholderia pseudomallei (strain 668), this protein is ATP synthase subunit alpha 2.